A 449-amino-acid polypeptide reads, in one-letter code: Phosphoglucosamine mutase (449 aa).

Catalysis depends on Ser-101, which acts as the Phosphoserine intermediate. Mg(2+) contacts are provided by Ser-101, Asp-242, Asp-244, and Asp-246. The residue at position 101 (Ser-101) is a Phosphoserine.

This sequence belongs to the phosphohexose mutase family. Requires Mg(2+) as cofactor. Post-translationally, activated by phosphorylation.

The enzyme catalyses alpha-D-glucosamine 1-phosphate = D-glucosamine 6-phosphate. Catalyzes the conversion of glucosamine-6-phosphate to glucosamine-1-phosphate. The polypeptide is Phosphoglucosamine mutase (Bradyrhizobium sp. (strain ORS 278)).